Consider the following 165-residue polypeptide: (2E)-enoyl-[ACP] glycyltransferase (165 aa).

It belongs to the FcoT family.

It catalyses the reaction a (3R)-3-[(carboxymethyl)amino]fatty acid + holo-[ACP] + H(+) = a (2E)-enoyl-[ACP] + glycine + H2O. The catalysed reaction is (3R)-3-[(carboxymethyl)amino]butanoate + holo-[ACP] + H(+) = (2E)-butenoyl-[ACP] + glycine + H2O. Its function is as follows. Involved in the biosynthesis of a unique class of isonitrile lipopeptides (INLPs). Catalyzes a Michael addition of glycine to the beta-position of an alpha,beta-unsaturated fatty acyl-[ACP], producing a (3R)-3-[(carboxymethyl)amino]fatty acid. Acts on the (2E)-butenoyl moiety loaded on the acyl-carrier protein ScoB, forming the product (3R)-3-[(carboxymethyl)amino]butanoate released from ScoB. This Streptomyces coeruleorubidus protein is (2E)-enoyl-[ACP] glycyltransferase.